We begin with the raw amino-acid sequence, 780 residues long: Protein phosphatase 1 regulatory subunit 21 (780 aa).

2 coiled-coil regions span residues 1-207 and 556-607; these read MASA…LKTL and ESRE…LKNT. The tract at residues 84 to 104 is disordered; sequence EPRGKKNKKSGESSSQLSQEQ. Over residues 95–104 the composition is skewed to low complexity; it reads ESSSQLSQEQ. Position 652 is a phosphothreonine (threonine 652). The stretch at 693 to 742 forms a coiled coil; it reads YAECRALSKRLALAEKSKEALTEEMKLASQNISRLQDELTTTKRSYEDQL. Residues 760–780 are disordered; the sequence is REEIDTLKMSSKGNSKKNKSR.

In terms of assembly, component of the FERRY complex, composed of five subunits: TBCK, PPP1R21, FERRY3, CRYZL1 and GATAD1, with a ratio of 1:2:1:2:4 respectively. PPP1R21 serves as a binding hub connecting all five complex subunits to mediate the binding to specific mitochondrial mRNAs. Interacts with the GTP-bound form of RAB5A (via its C-terminal region); linking the mRNP complex onto trafficking endosomes for active mRNA transport. Interacts with PPP1CA.

It localises to the early endosome. In terms of biological role, component of the FERRY complex (Five-subunit Endosomal Rab5 and RNA/ribosome intermediary). The FERRY complex directly interacts with mRNAs and RAB5A, and functions as a RAB5A effector involved in the localization and the distribution of specific mRNAs most likely by mediating their endosomal transport. The complex recruits mRNAs and ribosomes to early endosomes through direct mRNA-interaction. In the complex, PPP1R21 serves as a binding hub connecting all five complex subunits and mediating the binding to mRNA and early endosomes via RAB5A. Putative regulator of protein phosphatase 1 (PP1) activity. May play a role in the endosomal sorting process or in endosome maturation pathway. The chain is Protein phosphatase 1 regulatory subunit 21 (PPP1R21) from Homo sapiens (Human).